We begin with the raw amino-acid sequence, 338 residues long: tRNA N6-adenosine threonylcarbamoyltransferase (338 aa).

2 residues coordinate Fe cation: His111 and His115. Substrate-binding positions include 134–138, Asp167, Gly180, and Asn272; that span reads LVSGG. A Fe cation-binding site is contributed by Asp300.

It belongs to the KAE1 / TsaD family. Requires Fe(2+) as cofactor.

It is found in the cytoplasm. It catalyses the reaction L-threonylcarbamoyladenylate + adenosine(37) in tRNA = N(6)-L-threonylcarbamoyladenosine(37) in tRNA + AMP + H(+). Required for the formation of a threonylcarbamoyl group on adenosine at position 37 (t(6)A37) in tRNAs that read codons beginning with adenine. Is involved in the transfer of the threonylcarbamoyl moiety of threonylcarbamoyl-AMP (TC-AMP) to the N6 group of A37, together with TsaE and TsaB. TsaD likely plays a direct catalytic role in this reaction. This is tRNA N6-adenosine threonylcarbamoyltransferase from Vibrio parahaemolyticus serotype O3:K6 (strain RIMD 2210633).